The sequence spans 79 residues: Protein FAM236C (79 aa).

The segment at 19–48 (KGPQKDPEELVAVSDTAEDPSSGTGLPREP) is disordered.

Belongs to the FAM236 family.

This chain is Protein FAM236C, found in Homo sapiens (Human).